The sequence spans 428 residues: UPF0229 protein YeaH (428 aa).

Basic and acidic residues predominate over residues 78-90 (GNDHFIQNDRIER). Positions 78–111 (GNDHFIQNDRIERPQGGGGGGSGSGQGQASQDGE) are disordered. A compositionally biased stretch (gly residues) spans 92-103 (QGGGGGGSGSGQ).

Belongs to the UPF0229 family.

The polypeptide is UPF0229 protein YeaH (Salmonella enteritidis PT4 (strain P125109)).